The sequence spans 155 residues: uncharacterized protein (155 aa).

This is an uncharacterized protein from Rickettsia prowazekii (strain Madrid E).